The following is a 367-amino-acid chain: Histidinol-phosphate aminotransferase (367 aa).

Lys-222 bears the N6-(pyridoxal phosphate)lysine mark.

This sequence belongs to the class-II pyridoxal-phosphate-dependent aminotransferase family. Histidinol-phosphate aminotransferase subfamily. Requires pyridoxal 5'-phosphate as cofactor.

It catalyses the reaction L-histidinol phosphate + 2-oxoglutarate = 3-(imidazol-4-yl)-2-oxopropyl phosphate + L-glutamate. It functions in the pathway amino-acid biosynthesis; L-histidine biosynthesis; L-histidine from 5-phospho-alpha-D-ribose 1-diphosphate: step 7/9. The polypeptide is Histidinol-phosphate aminotransferase (Methanosphaera stadtmanae (strain ATCC 43021 / DSM 3091 / JCM 11832 / MCB-3)).